The sequence spans 124 residues: Small ribosomal subunit protein uS12 (124 aa).

The residue at position 89 (aspartate 89) is a 3-methylthioaspartic acid.

Belongs to the universal ribosomal protein uS12 family. In terms of assembly, part of the 30S ribosomal subunit. Contacts proteins S8 and S17. May interact with IF1 in the 30S initiation complex.

Its function is as follows. With S4 and S5 plays an important role in translational accuracy. Interacts with and stabilizes bases of the 16S rRNA that are involved in tRNA selection in the A site and with the mRNA backbone. Located at the interface of the 30S and 50S subunits, it traverses the body of the 30S subunit contacting proteins on the other side and probably holding the rRNA structure together. The combined cluster of proteins S8, S12 and S17 appears to hold together the shoulder and platform of the 30S subunit. The chain is Small ribosomal subunit protein uS12 from Aliivibrio salmonicida (strain LFI1238) (Vibrio salmonicida (strain LFI1238)).